Reading from the N-terminus, the 773-residue chain is DNA polymerase (773 aa).

Disulfide bonds link cysteine 428/cysteine 442 and cysteine 506/cysteine 509.

This sequence belongs to the DNA polymerase type-B family.

It carries out the reaction DNA(n) + a 2'-deoxyribonucleoside 5'-triphosphate = DNA(n+1) + diphosphate. Its function is as follows. In addition to polymerase activity, this DNA polymerase exhibits 3' to 5' exonuclease activity. This chain is DNA polymerase (pol), found in Thermococcus gorgonarius.